The chain runs to 242 residues: Ribonuclease PH (242 aa).

Phosphate contacts are provided by residues Arg-89 and 127 to 129; that span reads GTR.

Belongs to the RNase PH family. In terms of assembly, homohexameric ring arranged as a trimer of dimers.

The catalysed reaction is tRNA(n+1) + phosphate = tRNA(n) + a ribonucleoside 5'-diphosphate. Phosphorolytic 3'-5' exoribonuclease that plays an important role in tRNA 3'-end maturation. Removes nucleotide residues following the 3'-CCA terminus of tRNAs; can also add nucleotides to the ends of RNA molecules by using nucleoside diphosphates as substrates, but this may not be physiologically important. Probably plays a role in initiation of 16S rRNA degradation (leading to ribosome degradation) during starvation. The chain is Ribonuclease PH from Neisseria meningitidis serogroup B (strain ATCC BAA-335 / MC58).